The primary structure comprises 249 residues: 23S rRNA (guanosine-2'-O-)-methyltransferase RlmB (249 aa).

Residues Gly197, Ile217, and Leu226 each contribute to the S-adenosyl-L-methionine site.

It belongs to the class IV-like SAM-binding methyltransferase superfamily. RNA methyltransferase TrmH family. RlmB subfamily.

Its subcellular location is the cytoplasm. It catalyses the reaction guanosine(2251) in 23S rRNA + S-adenosyl-L-methionine = 2'-O-methylguanosine(2251) in 23S rRNA + S-adenosyl-L-homocysteine + H(+). In terms of biological role, specifically methylates the ribose of guanosine 2251 in 23S rRNA. The chain is 23S rRNA (guanosine-2'-O-)-methyltransferase RlmB from Ralstonia nicotianae (strain ATCC BAA-1114 / GMI1000) (Ralstonia solanacearum).